Consider the following 1265-residue polypeptide: Protein transport protein SEC31 (1265 aa).

WD repeat units follow at residues 6–46, 61–105, 116–156, 162–202, 209–252, 256–296, and 299–339; these read EIAR…ELWD, TVDN…KTKD, KHTG…EPFA, TPMD…EVLH, GGRA…APEK, GHKK…KLGE, and TTAN…PSVS. One copy of the WD 8; interaction with SEC13 repeat lies at 380–403; the sequence is SFGFGSKLVIINTDSSGKSTVKVD. Over residues 457 to 480 the composition is skewed to basic and acidic residues; sequence KESLFEDANNDEKEATSPETKKEN. Disordered regions lie at residues 457-485, 765-784, and 793-1163; these read KESL…EDDF, VKSS…GQTR, and PAYA…IPEN. Residues 794-810 are compositionally biased toward pro residues; the sequence is AYAPPVQAPPVQAPQPP. Composition is skewed to low complexity over residues 811 to 824, 865 to 875, 901 to 931, 939 to 951, and 969 to 987; these read LVQQ…QQQP, TPSSLSGTTSG, AKTA…FGSP, SQPG…SSAG, and SISR…TVPA. Residues 1004 to 1023 are compositionally biased toward polar residues; sequence SDASQPPSSGFASPTLNSSP. Composition is skewed to pro residues over residues 1062-1071 and 1083-1101; these read YAPPKNPYAV and APPP…PPQP.

It belongs to the WD repeat SEC31 family. The COPII coat is composed of at least 5 proteins: the SEC23/24 complex, the SEC13/31 complex, and the protein SAR1. SEC13 and SEC31 make a 2:2 tetramer that forms the edge element of the COPII outer coat. The tetramer self-assembles in multiple copies to form the complete polyhedral cage. Interacts (via WD 8) with SEC13.

It is found in the cytoplasmic vesicle. Its subcellular location is the COPII-coated vesicle membrane. The protein localises to the endoplasmic reticulum membrane. Component of the coat protein complex II (COPII) which promotes the formation of transport vesicles from the endoplasmic reticulum (ER). The coat has two main functions, the physical deformation of the endoplasmic reticulum membrane into vesicles and the selection of cargo molecules. The chain is Protein transport protein SEC31 (PGA63) from Candida albicans (strain SC5314 / ATCC MYA-2876) (Yeast).